Here is a 148-residue protein sequence, read N- to C-terminus: Arginine repressor (148 aa).

Belongs to the ArgR family.

The protein resides in the cytoplasm. It participates in amino-acid biosynthesis; L-arginine biosynthesis [regulation]. Functionally, regulates arginine biosynthesis genes. The sequence is that of Arginine repressor from Chlorobium luteolum (strain DSM 273 / BCRC 81028 / 2530) (Pelodictyon luteolum).